The sequence spans 511 residues: Histidine ammonia-lyase (511 aa).

Residues 143–145 (ASG) constitute a cross-link (5-imidazolinone (Ala-Gly)). 2,3-didehydroalanine (Ser) is present on Ser-144.

Belongs to the PAL/histidase family. Contains an active site 4-methylidene-imidazol-5-one (MIO), which is formed autocatalytically by cyclization and dehydration of residues Ala-Ser-Gly.

It is found in the cytoplasm. The catalysed reaction is L-histidine = trans-urocanate + NH4(+). It functions in the pathway amino-acid degradation; L-histidine degradation into L-glutamate; N-formimidoyl-L-glutamate from L-histidine: step 1/3. The protein is Histidine ammonia-lyase of Idiomarina loihiensis (strain ATCC BAA-735 / DSM 15497 / L2-TR).